Reading from the N-terminus, the 258-residue chain is Peptidase inhibitor 15 (258 aa).

Residues 1–21 (MTIIAAISCVFLFSILCETSA) form the signal peptide. A propeptide spanning residues 22–60 (LVLPNSTDLLLSNNNFTDIETALAAHLDSAKIPKARRKR) is cleaved from the precursor. Asn26, Asn36, and Asn124 each carry an N-linked (GlcNAc...) asparagine glycan. Residues 71 to 211 (LDYHNQVRGK…RRAVYLVCNY (141 aa)) enclose the SCP domain.

The protein belongs to the CRISP family.

It is found in the secreted. Its function is as follows. Serine protease inhibitor which displays weak inhibitory activity against trypsin. May play a role in facial patterning during embryonic development. The protein is Peptidase inhibitor 15 (PI15) of Gallus gallus (Chicken).